Reading from the N-terminus, the 556-residue chain is Calcium-dependent protein kinase 5 (556 aa).

Positions 1 to 40 (MGNSCRGSFKDKLDEGDNNKPEDYSKTSTTNLSSNSDHSP) are disordered. Gly-2 carries the N-myristoyl glycine lipid modification. Positions 8–25 (SFKDKLDEGDNNKPEDYS) are enriched in basic and acidic residues. The segment covering 26–39 (KTSTTNLSSNSDHS) has biased composition (low complexity). The 259-residue stretch at 97–355 (YTLSRKLGQG…AHEVLRHPWI (259 aa)) folds into the Protein kinase domain. ATP-binding positions include 103–111 (LGQGQFGTT) and Lys-126. Asp-221 acts as the Proton acceptor in catalysis. Ser-261 carries the post-translational modification Phosphoserine. The interval 361–391 (APDRALDPAVLSRLKQFSAMNKLKKMALKVI) is autoinhibitory domain. 4 consecutive EF-hand domains span residues 398-433 (EEIAGLREMFQAMDTDNSGAITFDELKAGLRKYGST), 434-469 (LKDTEIHDLMDAADVDNSGTIDYSEFIAATIHLNKL), 470-505 (EREEHLVAAFQYFDKDGSGFITIDELQQACVEHGMA), and 509-539 (LEDIIKEVDQNNDGKIDYGEFVEMMQKGNAG). Asp-411, Asp-413, Ser-415, Glu-422, Asp-447, Asp-449, Ser-451, Thr-453, Glu-458, Asp-483, Asp-485, Ser-487, Glu-494, Asp-517, Asn-519, Asp-521, Lys-523, and Glu-528 together coordinate Ca(2+).

It belongs to the protein kinase superfamily. Ser/Thr protein kinase family. CDPK subfamily.

The protein localises to the membrane. It carries out the reaction L-seryl-[protein] + ATP = O-phospho-L-seryl-[protein] + ADP + H(+). The catalysed reaction is L-threonyl-[protein] + ATP = O-phospho-L-threonyl-[protein] + ADP + H(+). Its activity is regulated as follows. Activated by calcium. Autophosphorylation may play an important role in the regulation of the kinase activity. May play a role in signal transduction pathways that involve calcium as a second messenger. The sequence is that of Calcium-dependent protein kinase 5 (CPK5) from Arabidopsis thaliana (Mouse-ear cress).